A 251-amino-acid polypeptide reads, in one-letter code: Aquaporin (251 aa).

The Cytoplasmic segment spans residues 1-11 (MAKEALKTLQS). Residues 12–32 (MFGEMVASFVFGFAVYSAILG) form a helical membrane-spanning segment. Residues 33-42 (SSISQSSADK) lie on the Extracellular side of the membrane. The helical transmembrane segment at 43–63 (VIVGLTVGFSGIGVIYSFCDV) threads the bilayer. At 64-86 (TIAHFNPAITLAAILTSKIDVLQ) the chain is on the cytoplasmic side. An NPA motif is present at residues 69–71 (NPA). The helical transmembrane segment at 87–107 (GLGYMLAQYIGFMLAVCALLV) threads the bilayer. Topologically, residues 108 to 133 (CSPVEYKETLDTIRPGPTDFGATSLN) are extracellular. Residues 134–154 (VFFAEFFLTAIFVHIVFATAV) traverse the membrane as a helical segment. Topologically, residues 155-179 (NPYKPKVDTEGKFVDPDEKEPVDRR) are cytoplasmic. Residues 180–200 (ITAPLCIGLTLGFLAFMGLAS) traverse the membrane as a helical segment. Over 201 to 224 (SGGAFNPGLTFAPMAMSNTWSHFW) the chain is Extracellular. Positions 206-208 (NPG) match the NPG motif. A helical transmembrane segment spans residues 225-245 (IYLGGQYLGGLTGGLLQVLVL). Over 246 to 251 (YKLSSD) the chain is Cytoplasmic.

This sequence belongs to the MIP/aquaporin (TC 1.A.8) family.

Its subcellular location is the cell membrane. Its function is as follows. Water channel required to facilitate the transport of water across membranes. Involved in osmotolerance. This chain is Aquaporin (AQP), found in Encephalitozoon intestinalis (Microsporidian parasite).